We begin with the raw amino-acid sequence, 232 residues long: Flagellar L-ring protein (232 aa).

The first 21 residues, 1–21 (MQKNAAHTYAISSLLVLSLTG), serve as a signal peptide directing secretion. Cys-22 is lipidated: N-palmitoyl cysteine. A lipid anchor (S-diacylglycerol cysteine) is attached at Cys-22.

Belongs to the FlgH family. As to quaternary structure, the basal body constitutes a major portion of the flagellar organelle and consists of four rings (L,P,S, and M) mounted on a central rod.

It is found in the cell outer membrane. The protein resides in the bacterial flagellum basal body. Assembles around the rod to form the L-ring and probably protects the motor/basal body from shearing forces during rotation. The protein is Flagellar L-ring protein of Shigella boydii serotype 18 (strain CDC 3083-94 / BS512).